The chain runs to 92 residues: Small ribosomal subunit protein uS19 (92 aa).

It belongs to the universal ribosomal protein uS19 family.

Protein S19 forms a complex with S13 that binds strongly to the 16S ribosomal RNA. The polypeptide is Small ribosomal subunit protein uS19 (Rhizobium etli (strain CIAT 652)).